Here is a 130-residue protein sequence, read N- to C-terminus: Succinate dehydrogenase assembly factor 3, mitochondrial (130 aa).

A mitochondrion-targeting transit peptide spans 1 to 8; it reads MRPSLLRL.

It belongs to the complex I LYR family. SDHAF3 subfamily. As to quaternary structure, interacts with the iron-sulfur protein subunit within the SDH catalytic dimer.

Its subcellular location is the mitochondrion matrix. In terms of biological role, plays an essential role in the assembly of succinate dehydrogenase (SDH), an enzyme complex (also referred to as respiratory complex II) that is a component of both the tricarboxylic acid (TCA) cycle and the mitochondrial electron transport chain, and which couples the oxidation of succinate to fumarate with the reduction of ubiquinone (coenzyme Q) to ubiquinol. Promotes maturation of the iron-sulfur protein subunit of the SDH catalytic dimer, protecting it from the deleterious effects of oxidants. May act together with SDHAF1. In Gibberella zeae (strain ATCC MYA-4620 / CBS 123657 / FGSC 9075 / NRRL 31084 / PH-1) (Wheat head blight fungus), this protein is Succinate dehydrogenase assembly factor 3, mitochondrial.